The following is a 101-amino-acid chain: Small ribosomal subunit protein uS10 (101 aa).

Belongs to the universal ribosomal protein uS10 family. Part of the 30S ribosomal subunit.

In terms of biological role, involved in the binding of tRNA to the ribosomes. The polypeptide is Small ribosomal subunit protein uS10 (Corynebacterium aurimucosum (strain ATCC 700975 / DSM 44827 / CIP 107346 / CN-1) (Corynebacterium nigricans)).